We begin with the raw amino-acid sequence, 302 residues long: Uroporphyrinogen-III synthase, chloroplastic (302 aa).

The tract at residues 1 to 39 is disordered; it reads MALSSSSHLLPFSRPPATFPRARHAGGGRGRAGATGRFI. A chloroplast-targeting transit peptide spans 1–50; it reads MALSSSSHLLPFSRPPATFPRARHAGGGRGRAGATGRFIACSSPPPPDVV.

The protein belongs to the uroporphyrinogen-III synthase family.

It is found in the plastid. The protein localises to the chloroplast. It carries out the reaction hydroxymethylbilane = uroporphyrinogen III + H2O. It functions in the pathway porphyrin-containing compound metabolism; protoporphyrin-IX biosynthesis; coproporphyrinogen-III from 5-aminolevulinate: step 3/4. Its function is as follows. Catalyzes cyclization of the linear tetrapyrrole, hydroxymethylbilane, to the macrocyclic uroporphyrinogen III, a precursor of tetrapyrroles such as chlorophyll, heme and phycobilins. This is Uroporphyrinogen-III synthase, chloroplastic (UROS) from Oryza sativa subsp. japonica (Rice).